Here is a 115-residue protein sequence, read N- to C-terminus: Large ribosomal subunit protein eL30 (115 aa).

Phosphoserine is present on residues serine 10 and serine 16. Lysine 26 bears the N6-acetyllysine; alternate mark. A Glycyl lysine isopeptide (Lys-Gly) (interchain with G-Cter in SUMO2); alternate cross-link involves residue lysine 26.

The protein belongs to the eukaryotic ribosomal protein eL30 family. As to quaternary structure, component of the large ribosomal subunit.

The protein resides in the cytoplasm. Component of the large ribosomal subunit. The ribosome is a large ribonucleoprotein complex responsible for the synthesis of proteins in the cell. This is Large ribosomal subunit protein eL30 (RPL30) from Homo sapiens (Human).